Here is a 403-residue protein sequence, read N- to C-terminus: Probable tRNA sulfurtransferase (403 aa).

One can recognise a THUMP domain in the interval 60-165 (KLAEERLKPI…KEGVFLSCRT (106 aa)). Residues 183–184 (ML), 208–209 (HF), Arg-265, Gly-287, and Gln-296 contribute to the ATP site.

This sequence belongs to the ThiI family.

The protein localises to the cytoplasm. It carries out the reaction [ThiI sulfur-carrier protein]-S-sulfanyl-L-cysteine + a uridine in tRNA + 2 reduced [2Fe-2S]-[ferredoxin] + ATP + H(+) = [ThiI sulfur-carrier protein]-L-cysteine + a 4-thiouridine in tRNA + 2 oxidized [2Fe-2S]-[ferredoxin] + AMP + diphosphate. The catalysed reaction is [ThiS sulfur-carrier protein]-C-terminal Gly-Gly-AMP + S-sulfanyl-L-cysteinyl-[cysteine desulfurase] + AH2 = [ThiS sulfur-carrier protein]-C-terminal-Gly-aminoethanethioate + L-cysteinyl-[cysteine desulfurase] + A + AMP + 2 H(+). It functions in the pathway cofactor biosynthesis; thiamine diphosphate biosynthesis. Catalyzes the ATP-dependent transfer of a sulfur to tRNA to produce 4-thiouridine in position 8 of tRNAs, which functions as a near-UV photosensor. Also catalyzes the transfer of sulfur to the sulfur carrier protein ThiS, forming ThiS-thiocarboxylate. This is a step in the synthesis of thiazole, in the thiamine biosynthesis pathway. The sulfur is donated as persulfide by IscS. This Listeria welshimeri serovar 6b (strain ATCC 35897 / DSM 20650 / CCUG 15529 / CIP 8149 / NCTC 11857 / SLCC 5334 / V8) protein is Probable tRNA sulfurtransferase.